The chain runs to 158 residues: Protein-export protein SecB (158 aa).

The protein belongs to the SecB family. Homotetramer, a dimer of dimers. One homotetramer interacts with 1 SecA dimer.

Its subcellular location is the cytoplasm. In terms of biological role, one of the proteins required for the normal export of preproteins out of the cell cytoplasm. It is a molecular chaperone that binds to a subset of precursor proteins, maintaining them in a translocation-competent state. It also specifically binds to its receptor SecA. This chain is Protein-export protein SecB, found in Photorhabdus laumondii subsp. laumondii (strain DSM 15139 / CIP 105565 / TT01) (Photorhabdus luminescens subsp. laumondii).